The primary structure comprises 299 residues: ATP phosphoribosyltransferase (299 aa).

This sequence belongs to the ATP phosphoribosyltransferase family. Long subfamily. Equilibrium between an active dimeric form, an inactive hexameric form and higher aggregates. Interconversion between the various forms is largely reversible and is influenced by the natural substrates and inhibitors of the enzyme. Requires Mg(2+) as cofactor.

It localises to the cytoplasm. It carries out the reaction 1-(5-phospho-beta-D-ribosyl)-ATP + diphosphate = 5-phospho-alpha-D-ribose 1-diphosphate + ATP. The protein operates within amino-acid biosynthesis; L-histidine biosynthesis; L-histidine from 5-phospho-alpha-D-ribose 1-diphosphate: step 1/9. Feedback inhibited by histidine. Catalyzes the condensation of ATP and 5-phosphoribose 1-diphosphate to form N'-(5'-phosphoribosyl)-ATP (PR-ATP). Has a crucial role in the pathway because the rate of histidine biosynthesis seems to be controlled primarily by regulation of HisG enzymatic activity. The polypeptide is ATP phosphoribosyltransferase (Salmonella enteritidis PT4 (strain P125109)).